We begin with the raw amino-acid sequence, 76 residues long: Liver-expressed antimicrobial peptide 2 (76 aa).

The signal sequence occupies residues 1–22 (MLQLKLFAVLLTCLLLLGQVNS). The propeptide occupies 23–36 (SPVPEVSSAKRSRR). 2 cysteine pairs are disulfide-bonded: Cys53/Cys64 and Cys59/Cys69.

The protein belongs to the LEAP2 family.

It is found in the secreted. Its function is as follows. Has an antimicrobial activity. This Mus musculus (Mouse) protein is Liver-expressed antimicrobial peptide 2 (Leap2).